The chain runs to 248 residues: Leucyl/phenylalanyl-tRNA--protein transferase (248 aa).

The protein belongs to the L/F-transferase family.

The protein resides in the cytoplasm. The catalysed reaction is N-terminal L-lysyl-[protein] + L-leucyl-tRNA(Leu) = N-terminal L-leucyl-L-lysyl-[protein] + tRNA(Leu) + H(+). It catalyses the reaction N-terminal L-arginyl-[protein] + L-leucyl-tRNA(Leu) = N-terminal L-leucyl-L-arginyl-[protein] + tRNA(Leu) + H(+). The enzyme catalyses L-phenylalanyl-tRNA(Phe) + an N-terminal L-alpha-aminoacyl-[protein] = an N-terminal L-phenylalanyl-L-alpha-aminoacyl-[protein] + tRNA(Phe). Functions in the N-end rule pathway of protein degradation where it conjugates Leu, Phe and, less efficiently, Met from aminoacyl-tRNAs to the N-termini of proteins containing an N-terminal arginine or lysine. The protein is Leucyl/phenylalanyl-tRNA--protein transferase of Oleidesulfovibrio alaskensis (strain ATCC BAA-1058 / DSM 17464 / G20) (Desulfovibrio alaskensis).